Here is a 282-residue protein sequence, read N- to C-terminus: 4-hydroxy-3-methylbut-2-enyl diphosphate reductase (282 aa).

Cys12 provides a ligand contact to [4Fe-4S] cluster. 2 residues coordinate (2E)-4-hydroxy-3-methylbut-2-enyl diphosphate: His40 and His72. Dimethylallyl diphosphate contacts are provided by His40 and His72. Isopentenyl diphosphate is bound by residues His40 and His72. Cys94 contacts [4Fe-4S] cluster. His122 is a binding site for (2E)-4-hydroxy-3-methylbut-2-enyl diphosphate. A dimethylallyl diphosphate-binding site is contributed by His122. His122 contacts isopentenyl diphosphate. The active-site Proton donor is the Glu124. Thr160 is a binding site for (2E)-4-hydroxy-3-methylbut-2-enyl diphosphate. Position 188 (Cys188) interacts with [4Fe-4S] cluster. Residues Ser216, Asn218, and Ser260 each coordinate (2E)-4-hydroxy-3-methylbut-2-enyl diphosphate. Residues Ser216, Asn218, and Ser260 each contribute to the dimethylallyl diphosphate site. Residues Ser216, Asn218, and Ser260 each coordinate isopentenyl diphosphate.

The protein belongs to the IspH family. It depends on [4Fe-4S] cluster as a cofactor.

It catalyses the reaction isopentenyl diphosphate + 2 oxidized [2Fe-2S]-[ferredoxin] + H2O = (2E)-4-hydroxy-3-methylbut-2-enyl diphosphate + 2 reduced [2Fe-2S]-[ferredoxin] + 2 H(+). The enzyme catalyses dimethylallyl diphosphate + 2 oxidized [2Fe-2S]-[ferredoxin] + H2O = (2E)-4-hydroxy-3-methylbut-2-enyl diphosphate + 2 reduced [2Fe-2S]-[ferredoxin] + 2 H(+). It participates in isoprenoid biosynthesis; dimethylallyl diphosphate biosynthesis; dimethylallyl diphosphate from (2E)-4-hydroxy-3-methylbutenyl diphosphate: step 1/1. It functions in the pathway isoprenoid biosynthesis; isopentenyl diphosphate biosynthesis via DXP pathway; isopentenyl diphosphate from 1-deoxy-D-xylulose 5-phosphate: step 6/6. Its function is as follows. Catalyzes the conversion of 1-hydroxy-2-methyl-2-(E)-butenyl 4-diphosphate (HMBPP) into a mixture of isopentenyl diphosphate (IPP) and dimethylallyl diphosphate (DMAPP). Acts in the terminal step of the DOXP/MEP pathway for isoprenoid precursor biosynthesis. In Geotalea daltonii (strain DSM 22248 / JCM 15807 / FRC-32) (Geobacter daltonii), this protein is 4-hydroxy-3-methylbut-2-enyl diphosphate reductase.